The chain runs to 127 residues: Large ribosomal subunit protein bL12 (127 aa).

The protein belongs to the bacterial ribosomal protein bL12 family. In terms of assembly, homodimer. Part of the ribosomal stalk of the 50S ribosomal subunit. Forms a multimeric L10(L12)X complex, where L10 forms an elongated spine to which 2 to 4 L12 dimers bind in a sequential fashion. Binds GTP-bound translation factors.

Forms part of the ribosomal stalk which helps the ribosome interact with GTP-bound translation factors. Is thus essential for accurate translation. This is Large ribosomal subunit protein bL12 from Streptococcus thermophilus (strain CNRZ 1066).